Consider the following 343-residue polypeptide: 2,3,4,5-tetrahydropyridine-2,6-dicarboxylate N-succinyltransferase (343 aa).

Glutamate 204 is a Mg(2+) binding site. Glutamate 220 (acyl-anhydride intermediate) is an active-site residue. Succinyl-CoA is bound by residues arginine 222, glycine 237, serine 240, alanine 263, 278 to 279 (ES), glycine 286, lysine 303, and 316 to 319 (RRNS).

This sequence belongs to the type 2 tetrahydrodipicolinate N-succinyltransferase family. In terms of assembly, homotrimer.

It localises to the cytoplasm. It catalyses the reaction (S)-2,3,4,5-tetrahydrodipicolinate + succinyl-CoA + H2O = (S)-2-succinylamino-6-oxoheptanedioate + CoA. It participates in amino-acid biosynthesis; L-lysine biosynthesis via DAP pathway; LL-2,6-diaminopimelate from (S)-tetrahydrodipicolinate (succinylase route): step 1/3. Its function is as follows. Catalyzes the conversion of the cyclic tetrahydrodipicolinate (THDP) into the acyclic N-succinyl-L-2-amino-6-oxopimelate using succinyl-CoA. This Vibrio cholerae serotype O1 (strain ATCC 39315 / El Tor Inaba N16961) protein is 2,3,4,5-tetrahydropyridine-2,6-dicarboxylate N-succinyltransferase.